A 569-amino-acid chain; its full sequence is MNSEVIKKGVERAPHRSLLRATGIIKDEADFQKPFVAIANSFAEIVPGHAHLNEFVKEIKEAVREAGGVPFEFNTLALCDGIAMNHPGMRYSLPSRELVADSVETMVQGHRFDGLICIPNCDKIVPGMLMAAVRLNIPTIFVSGGPMKAGRAKDGRPIDLISVFEGIGAFRAGKIDAGDLLELEQAACPGYGSCAGMFTANSMNCLCEALGLALPGNGTILAVDPRRSELKKWAGRQIVELIKRDLRPRDIVTPEAIDNAFALDVAMGGSTNTILHLLAVAQEAGINYPLKRVNLISARTPTLCKISPASSLHIEDVDRAGGVSAVLGELSRKPGLLNLDCLTVTGETLGETVGQVQSLDPRVIRGVEEPLSPVGGLKVLFGSLAPEGAVVKTAAVVPQMMRHQGPAVVFNSEAEASAAILGGRIKHGDVVVIRFEGPKGGPGFMEMLGPTAALVGMGLGESVALVTDGRFSGGTRGACIGHVCPEAASGGPIALIKDGDLISYDLEAGTLELLVPQEELAARKAAFTPPLRQGLTGWLARYVQMVAPASIGAVLRPACGRPPGEQDYE.

Residue D80 coordinates Mg(2+). Residue C121 participates in [2Fe-2S] cluster binding. Residues D122 and K123 each contribute to the Mg(2+) site. Position 123 is an N6-carboxylysine (K123). A [2Fe-2S] cluster-binding site is contributed by C194. Residue E446 participates in Mg(2+) binding. The active-site Proton acceptor is the S472.

It belongs to the IlvD/Edd family. As to quaternary structure, homodimer. [2Fe-2S] cluster is required as a cofactor. Requires Mg(2+) as cofactor.

The catalysed reaction is (2R)-2,3-dihydroxy-3-methylbutanoate = 3-methyl-2-oxobutanoate + H2O. The enzyme catalyses (2R,3R)-2,3-dihydroxy-3-methylpentanoate = (S)-3-methyl-2-oxopentanoate + H2O. It participates in amino-acid biosynthesis; L-isoleucine biosynthesis; L-isoleucine from 2-oxobutanoate: step 3/4. It functions in the pathway amino-acid biosynthesis; L-valine biosynthesis; L-valine from pyruvate: step 3/4. Functions in the biosynthesis of branched-chain amino acids. Catalyzes the dehydration of (2R,3R)-2,3-dihydroxy-3-methylpentanoate (2,3-dihydroxy-3-methylvalerate) into 2-oxo-3-methylpentanoate (2-oxo-3-methylvalerate) and of (2R)-2,3-dihydroxy-3-methylbutanoate (2,3-dihydroxyisovalerate) into 2-oxo-3-methylbutanoate (2-oxoisovalerate), the penultimate precursor to L-isoleucine and L-valine, respectively. This is Dihydroxy-acid dehydratase from Desulforudis audaxviator (strain MP104C).